The chain runs to 155 residues: Deoxyuridine 5'-triphosphate nucleotidohydrolase (155 aa).

Substrate-binding positions include 74 to 76 (RSG), Asn87, and 91 to 93 (LID).

The protein belongs to the dUTPase family. It depends on Mg(2+) as a cofactor.

The enzyme catalyses dUTP + H2O = dUMP + diphosphate + H(+). The protein operates within pyrimidine metabolism; dUMP biosynthesis; dUMP from dCTP (dUTP route): step 2/2. Functionally, this enzyme is involved in nucleotide metabolism: it produces dUMP, the immediate precursor of thymidine nucleotides and it decreases the intracellular concentration of dUTP so that uracil cannot be incorporated into DNA. The chain is Deoxyuridine 5'-triphosphate nucleotidohydrolase from Xanthomonas axonopodis pv. citri (strain 306).